Reading from the N-terminus, the 383-residue chain is 8-amino-7-oxononanoate synthase (383 aa).

Arg20 lines the substrate pocket. Position 107-108 (107-108) interacts with pyridoxal 5'-phosphate; it reads GY. His132 contacts substrate. Residues Ser178, His206, and Thr233 each coordinate pyridoxal 5'-phosphate. Lys236 bears the N6-(pyridoxal phosphate)lysine mark. Thr349 is a substrate binding site.

Belongs to the class-II pyridoxal-phosphate-dependent aminotransferase family. BioF subfamily. As to quaternary structure, homodimer. The cofactor is pyridoxal 5'-phosphate.

The catalysed reaction is 6-carboxyhexanoyl-[ACP] + L-alanine + H(+) = (8S)-8-amino-7-oxononanoate + holo-[ACP] + CO2. Its pathway is cofactor biosynthesis; biotin biosynthesis. In terms of biological role, catalyzes the decarboxylative condensation of pimeloyl-[acyl-carrier protein] and L-alanine to produce 8-amino-7-oxononanoate (AON), [acyl-carrier protein], and carbon dioxide. The protein is 8-amino-7-oxononanoate synthase of Chromobacterium violaceum (strain ATCC 12472 / DSM 30191 / JCM 1249 / CCUG 213 / NBRC 12614 / NCIMB 9131 / NCTC 9757 / MK).